The following is a 65-amino-acid chain: Hainantoxin-X-3 (65 aa).

The signal sequence occupies residues 1–20 (MNMKILVLVAVLCLVVSTHA). Positions 21–37 (ERHSKTDMEDSPMIQER) are excised as a propeptide. 2 cysteine pairs are disulfide-bonded: Cys46–Cys59 and Cys55–Cys64.

Belongs to the neurotoxin 36 family. 02 subfamily. As to expression, expressed by the venom gland.

It is found in the secreted. Its function is as follows. Reversibly blocks N-type calcium channels (Cav2.2/CACNA1B) in rat dorsal root ganglion cells. Elicits no toxic symptoms in either vertebrates or invertebrates during a period of 48 hours post-injection, when it was assayed in vivo by direct injection into mice and cockroaches. The protein is Hainantoxin-X-3 of Cyriopagopus hainanus (Chinese bird spider).